Reading from the N-terminus, the 279-residue chain is Type III pantothenate kinase (279 aa).

An ATP-binding site is contributed by 6 to 13 (DIGNTLSK). Substrate is bound by residues Y92 and 99-102 (GVDR). Residue D101 is the Proton acceptor of the active site. D120 provides a ligand contact to K(+). S123 lines the ATP pocket. Position 177 (T177) interacts with substrate.

It belongs to the type III pantothenate kinase family. In terms of assembly, homodimer. Requires NH4(+) as cofactor. K(+) serves as cofactor.

The protein localises to the cytoplasm. It catalyses the reaction (R)-pantothenate + ATP = (R)-4'-phosphopantothenate + ADP + H(+). The protein operates within cofactor biosynthesis; coenzyme A biosynthesis; CoA from (R)-pantothenate: step 1/5. Its function is as follows. Catalyzes the phosphorylation of pantothenate (Pan), the first step in CoA biosynthesis. This Chromohalobacter salexigens (strain ATCC BAA-138 / DSM 3043 / CIP 106854 / NCIMB 13768 / 1H11) protein is Type III pantothenate kinase.